Reading from the N-terminus, the 255-residue chain is Aliphatic sulfonates import ATP-binding protein SsuB (255 aa).

Residues 12-233 (LLLNAVSKHY…RLGSVRLAEL (222 aa)) form the ABC transporter domain. 44-51 (GRSGGGKS) is a binding site for ATP.

Belongs to the ABC transporter superfamily. Aliphatic sulfonates importer (TC 3.A.1.17.2) family. The complex is composed of two ATP-binding proteins (SsuB), two transmembrane proteins (SsuC) and a solute-binding protein (SsuA).

The protein localises to the cell inner membrane. The catalysed reaction is ATP + H2O + aliphatic sulfonate-[sulfonate-binding protein]Side 1 = ADP + phosphate + aliphatic sulfonateSide 2 + [sulfonate-binding protein]Side 1.. Its function is as follows. Part of the ABC transporter complex SsuABC involved in aliphatic sulfonates import. Responsible for energy coupling to the transport system. The protein is Aliphatic sulfonates import ATP-binding protein SsuB of Shigella flexneri.